Reading from the N-terminus, the 361-residue chain is Peptide chain release factor 1 (361 aa).

An N5-methylglutamine modification is found at glutamine 233. The disordered stretch occupies residues 282–310 (SKKQAERAQNRKSQVGSGDRSERIRTYNF).

It belongs to the prokaryotic/mitochondrial release factor family. Post-translationally, methylated by PrmC. Methylation increases the termination efficiency of RF1.

The protein resides in the cytoplasm. Functionally, peptide chain release factor 1 directs the termination of translation in response to the peptide chain termination codons UAG and UAA. In Treponema denticola (strain ATCC 35405 / DSM 14222 / CIP 103919 / JCM 8153 / KCTC 15104), this protein is Peptide chain release factor 1.